Consider the following 432-residue polypeptide: MMQNIHFIGIGGIGISALARFLREKGFKISGSDLKESKITKELEKEGVKVSIPHHKDNILNKDLVIYSAAIKEENPEFKYAKELGIKCLSRKEALPLILEDKRVFAVAGAHGKSTTSSILASLLDDASVIIGAILKEFGSNMIYKESQNLVFEADESDSSFLNSNPYLAIVTNAEAEHLDHYGNEVSKLHHAYTQFLDVAKIRVINAEDEFLKNYKNESIKLYPSKDIKNCTMCIENFKPFTSFELKDLGEFKVFGMGYHLALDASLAILAALNFLDIETIRTRLKNYQGIKKRFDILHADENLVLIDDYGHHPTEIKATLSAAQEYVKLGGYKKITAIFEPHRYTRLATNLKEFAKAFEGVDELVILPVYAAGEEPIELDLKAVFPKALFVEDIKREGKFLVASKGQVFEEGLIIGFGAGDISNKLRQKNE.

109–115 (GAHGKST) is an ATP binding site.

This sequence belongs to the MurCDEF family.

It localises to the cytoplasm. It catalyses the reaction UDP-N-acetyl-alpha-D-muramate + L-alanine + ATP = UDP-N-acetyl-alpha-D-muramoyl-L-alanine + ADP + phosphate + H(+). The protein operates within cell wall biogenesis; peptidoglycan biosynthesis. In terms of biological role, cell wall formation. The protein is UDP-N-acetylmuramate--L-alanine ligase of Campylobacter jejuni subsp. jejuni serotype O:2 (strain ATCC 700819 / NCTC 11168).